The primary structure comprises 143 residues: Transcription antitermination protein NusB (143 aa).

It belongs to the NusB family.

Its function is as follows. Involved in transcription antitermination. Required for transcription of ribosomal RNA (rRNA) genes. Binds specifically to the boxA antiterminator sequence of the ribosomal RNA (rrn) operons. The sequence is that of Transcription antitermination protein NusB from Desulforamulus reducens (strain ATCC BAA-1160 / DSM 100696 / MI-1) (Desulfotomaculum reducens).